Here is a 93-residue protein sequence, read N- to C-terminus: Small ribosomal subunit protein uS19 (93 aa).

This sequence belongs to the universal ribosomal protein uS19 family.

Functionally, protein S19 forms a complex with S13 that binds strongly to the 16S ribosomal RNA. The protein is Small ribosomal subunit protein uS19 of Clavibacter michiganensis subsp. michiganensis (strain NCPPB 382).